We begin with the raw amino-acid sequence, 351 residues long: Fe(3+) ions import ATP-binding protein FbpC (351 aa).

The 231-residue stretch at 7–237 (VELKNVTKRF…PASEFMASFM (231 aa)) folds into the ABC transporter domain. Position 39 to 46 (39 to 46 (GPSGCGKT)) interacts with ATP.

This sequence belongs to the ABC transporter superfamily. Fe(3+) ion importer (TC 3.A.1.10) family. In terms of assembly, the complex is composed of two ATP-binding proteins (FbpC), two transmembrane proteins (FbpB) and a solute-binding protein (FbpA).

Its subcellular location is the cell inner membrane. It catalyses the reaction Fe(3+)(out) + ATP + H2O = Fe(3+)(in) + ADP + phosphate + H(+). In terms of biological role, part of the ABC transporter complex FbpABC involved in Fe(3+) ions import. Responsible for energy coupling to the transport system. The chain is Fe(3+) ions import ATP-binding protein FbpC from Photorhabdus laumondii subsp. laumondii (strain DSM 15139 / CIP 105565 / TT01) (Photorhabdus luminescens subsp. laumondii).